A 125-amino-acid polypeptide reads, in one-letter code: Holo-[acyl-carrier-protein] synthase (125 aa).

The Mg(2+) site is built by D8 and E57.

The protein belongs to the P-Pant transferase superfamily. AcpS family. Requires Mg(2+) as cofactor.

The protein resides in the cytoplasm. It catalyses the reaction apo-[ACP] + CoA = holo-[ACP] + adenosine 3',5'-bisphosphate + H(+). In terms of biological role, transfers the 4'-phosphopantetheine moiety from coenzyme A to a Ser of acyl-carrier-protein. The sequence is that of Holo-[acyl-carrier-protein] synthase from Thermus thermophilus (strain ATCC BAA-163 / DSM 7039 / HB27).